Here is a 314-residue protein sequence, read N- to C-terminus: Hydroxyacyl-coenzyme A dehydrogenase, mitochondrial (314 aa).

Residues 1-12 (MAFVTRQFVRSM) constitute a mitochondrion transit peptide. NAD(+) contacts are provided by residues 34–39 (GGGLMG) and aspartate 57. Residue serine 73 participates in CoA binding. Lysine 75 is modified (N6-acetyllysine). Lysine 80 is a binding site for CoA. Lysine 80 is subject to N6-succinyllysine. N6-acetyllysine; alternate occurs at positions 81 and 87. Lysine 81 and lysine 87 each carry N6-succinyllysine; alternate. Glutamate 122 contributes to the NAD(+) binding site. Lysine 125 is subject to N6-acetyllysine. Lysine 127 is an NAD(+) binding site. Lysine 127 is subject to N6-(2-hydroxyisobutyryl)lysine. Lysine 136 carries the post-translational modification N6-acetyllysine; alternate. The residue at position 136 (lysine 136) is an N6-succinyllysine; alternate. The NAD(+) site is built by serine 149 and asparagine 173. Serine 149 lines the CoA pocket. N6-acetyllysine is present on lysine 179. N6-acetyllysine; alternate occurs at positions 185, 192, and 202. N6-succinyllysine; alternate is present on residues lysine 185, lysine 192, and lysine 202. Lysine 206 carries the post-translational modification N6-succinyllysine. Residues lysine 212 and lysine 241 each carry the N6-acetyllysine; alternate modification. 2 positions are modified to N6-succinyllysine; alternate: lysine 212 and lysine 241. Lysine 305 lines the NAD(+) pocket. Residue lysine 312 is modified to N6-acetyllysine; alternate. Lysine 312 carries the N6-succinyllysine; alternate modification.

Belongs to the 3-hydroxyacyl-CoA dehydrogenase family. In terms of assembly, homodimer. Interacts with GLUD1; this interaction inhibits the activation of glutamate dehydrogenase 1 (GLUD1). In terms of processing, succinylation at Lys-81, adjacent to a coenzyme A binding site. Desuccinylated by SIRT5.

The protein resides in the mitochondrion matrix. The enzyme catalyses a (3S)-3-hydroxyacyl-CoA + NAD(+) = a 3-oxoacyl-CoA + NADH + H(+). It carries out the reaction (3S)-3-hydroxybutanoyl-CoA + NAD(+) = acetoacetyl-CoA + NADH + H(+). The catalysed reaction is (3S)-hydroxydecanoyl-CoA + NAD(+) = 3-oxodecanoyl-CoA + NADH + H(+). It catalyses the reaction (3S)-hydroxyhexadecanoyl-CoA + NAD(+) = 3-oxohexadecanoyl-CoA + NADH + H(+). It functions in the pathway lipid metabolism; fatty acid beta-oxidation. Its function is as follows. Mitochondrial fatty acid beta-oxidation enzyme that catalyzes the third step of the beta-oxidation cycle for medium and short-chain 3-hydroxy fatty acyl-CoAs (C4 to C10). Plays a role in the control of insulin secretion by inhibiting the activation of glutamate dehydrogenase 1 (GLUD1), an enzyme that has an important role in regulating amino acid-induced insulin secretion. Plays a role in the maintenance of normal spermatogenesis through the reduction of fatty acid accumulation in the testes. The protein is Hydroxyacyl-coenzyme A dehydrogenase, mitochondrial (Hadh) of Rattus norvegicus (Rat).